A 98-amino-acid chain; its full sequence is NADH-ubiquinone oxidoreductase chain 4L (98 aa).

3 helical membrane passes run 1–21 (MSLV…GLLM), 29–49 (SLLC…LTIL), and 61–81 (IILL…LVMV).

It belongs to the complex I subunit 4L family. As to quaternary structure, core subunit of respiratory chain NADH dehydrogenase (Complex I) which is composed of 45 different subunits.

It is found in the mitochondrion inner membrane. The enzyme catalyses a ubiquinone + NADH + 5 H(+)(in) = a ubiquinol + NAD(+) + 4 H(+)(out). In terms of biological role, core subunit of the mitochondrial membrane respiratory chain NADH dehydrogenase (Complex I) which catalyzes electron transfer from NADH through the respiratory chain, using ubiquinone as an electron acceptor. Part of the enzyme membrane arm which is embedded in the lipid bilayer and involved in proton translocation. The chain is NADH-ubiquinone oxidoreductase chain 4L (MT-ND4L) from Rangifer tarandus (Reindeer).